We begin with the raw amino-acid sequence, 725 residues long: uncharacterized protein (725 aa).

One can recognise a FtsK domain in the interval 363–556; sequence GTYVEIPLYS…FVTTRPEDSC (194 aa). Position 382-389 (382-389) interacts with ATP; it reads GRTRGGKS.

It belongs to the FtsK/SpoIIIE/SftA family.

Functionally, probable DNA motor protein. May track DNA in a ATP-dependent manner by generating positive supercoils in front of it and negative supercoils behind it. This is an uncharacterized protein from Nostoc sp. (strain PCC 7120 / SAG 25.82 / UTEX 2576).